A 211-amino-acid chain; its full sequence is Protein-methionine-sulfoxide reductase heme-binding subunit MsrQ (211 aa).

5 consecutive transmembrane segments (helical) span residues 17–37 (LAGL…GLGA), 54–74 (FLLA…PLLI), 82–102 (LWCF…ELGV), 116–136 (PYLT…FTST), and 153–173 (FVYL…KIIS).

This sequence belongs to the MsrQ family. In terms of assembly, heterodimer of a catalytic subunit (MsrP) and a heme-binding subunit (MsrQ). Requires FMN as cofactor. The cofactor is heme b.

It is found in the cell inner membrane. Functionally, part of the MsrPQ system that repairs oxidized periplasmic proteins containing methionine sulfoxide residues (Met-O), using respiratory chain electrons. Thus protects these proteins from oxidative-stress damage caused by reactive species of oxygen and chlorine generated by the host defense mechanisms. MsrPQ is essential for the maintenance of envelope integrity under bleach stress, rescuing a wide series of structurally unrelated periplasmic proteins from methionine oxidation, including the primary periplasmic chaperone SurA and the lipoprotein Pal. MsrQ provides electrons for reduction to the reductase catalytic subunit MsrP, using the quinone pool of the respiratory chain. In Escherichia coli (strain SMS-3-5 / SECEC), this protein is Protein-methionine-sulfoxide reductase heme-binding subunit MsrQ.